Consider the following 95-residue polypeptide: Large ribosomal subunit protein uL23 (95 aa).

This sequence belongs to the universal ribosomal protein uL23 family. As to quaternary structure, part of the 50S ribosomal subunit. Contacts protein L29, and trigger factor when it is bound to the ribosome.

One of the early assembly proteins it binds 23S rRNA. One of the proteins that surrounds the polypeptide exit tunnel on the outside of the ribosome. Forms the main docking site for trigger factor binding to the ribosome. The sequence is that of Large ribosomal subunit protein uL23 from Desulfatibacillum aliphaticivorans.